We begin with the raw amino-acid sequence, 402 residues long: Major outer membrane porin (402 aa).

Positions 1–22 (MKKLLKSALLFAATGSALSLQA) are cleaved as a signal peptide.

It belongs to the chlamydial porin (CP) (TC 1.B.2) family. In terms of assembly, part of a disulfide cross-linked outer membrane complex (COMC) composed of the major outer membrane porin (MOMP), the small cysteine-rich protein (OmcA) and the large cysteine-rich periplasmic protein (OmcB).

Its subcellular location is the cell outer membrane. In elementary bodies (EBs, the infectious stage, which is able to survive outside the host cell) provides the structural integrity of the outer envelope through disulfide cross-links with the small cysteine-rich protein and the large cysteine-rich periplasmic protein. It has been described in publications as the Sarkosyl-insoluble COMC (Chlamydia outer membrane complex), and serves as the functional equivalent of peptidoglycan. It is present but some of the disulfide bonds are reduced in reticulate bodies (RBs). Its function is as follows. Permits diffusion of specific solutes through the outer membrane. This chain is Major outer membrane porin (ompA), found in Chlamydophila psittaci (strain ATCC VR-125 / 6BC) (Chlamydia psittaci).